The following is a 385-amino-acid chain: 28S rRNA (uridine-N(3))-methyltransferase (385 aa).

Disordered regions lie at residues 1-35 and 47-72; these read MAER…KKKW and QRAQ…NQGR. Basic and acidic residues-rich tracts occupy residues 15 to 35 and 47 to 58; these read HGQR…KKKW and QRAQEEEAKRQE. 4 residues coordinate S-adenosyl-L-methionine: arginine 293, glycine 313, asparagine 342, and threonine 343.

Belongs to the class IV-like SAM-binding methyltransferase superfamily. As to quaternary structure, interacts with INCA1.

The protein localises to the cytoplasm. The protein resides in the cytoskeleton. It localises to the spindle. Its subcellular location is the chromosome. It is found in the centromere. The protein localises to the kinetochore. The protein resides in the microtubule organizing center. It localises to the centrosome. The enzyme catalyses uridine in 28S rRNA + S-adenosyl-L-methionine = N(3)-methyluridine in 28S rRNA + S-adenosyl-L-homocysteine + H(+). Its function is as follows. S-adenosyl-L-methionine-dependent methyltransferase that specifically methylates the N3 position of a uridine in 28S rRNA. Required for association of the centrosomes with the poles of the bipolar mitotic spindle during metaphase. Also involved in chromosome alignment. May promote centrosome maturation probably by recruiting A-kinase anchor protein AKAP9 to centrosomes in early mitosis. Binds specifically to miRNA MIR145 hairpin, regulates MIR145 expression at a postranscriptional level. The chain is 28S rRNA (uridine-N(3))-methyltransferase from Mus musculus (Mouse).